A 286-amino-acid polypeptide reads, in one-letter code: Pyridoxal kinase PdxY (286 aa).

Substrate contacts are provided by residues S9 and 44–45 (TQ). ATP contacts are provided by residues D111, A143, E148, K181, and 208-211 (RPLV). D223 serves as a coordination point for substrate.

Belongs to the pyridoxine kinase family. PdxY subfamily. In terms of assembly, homodimer. Mg(2+) is required as a cofactor.

It carries out the reaction pyridoxal + ATP = pyridoxal 5'-phosphate + ADP + H(+). The protein operates within cofactor metabolism; pyridoxal 5'-phosphate salvage; pyridoxal 5'-phosphate from pyridoxal: step 1/1. Its function is as follows. Pyridoxal kinase involved in the salvage pathway of pyridoxal 5'-phosphate (PLP). Catalyzes the phosphorylation of pyridoxal to PLP. The chain is Pyridoxal kinase PdxY from Salmonella paratyphi A (strain ATCC 9150 / SARB42).